The following is a 126-amino-acid chain: Large ribosomal subunit protein bL12 (126 aa).

It belongs to the bacterial ribosomal protein bL12 family. As to quaternary structure, homodimer. Part of the ribosomal stalk of the 50S ribosomal subunit. Forms a multimeric L10(L12)X complex, where L10 forms an elongated spine to which 2 to 4 L12 dimers bind in a sequential fashion. Binds GTP-bound translation factors.

In terms of biological role, forms part of the ribosomal stalk which helps the ribosome interact with GTP-bound translation factors. Is thus essential for accurate translation. This is Large ribosomal subunit protein bL12 from Methylobacterium nodulans (strain LMG 21967 / CNCM I-2342 / ORS 2060).